Consider the following 78-residue polypeptide: Large ribosomal subunit protein bL28 (78 aa).

It belongs to the bacterial ribosomal protein bL28 family.

The polypeptide is Large ribosomal subunit protein bL28 (Histophilus somni (strain 129Pt) (Haemophilus somnus)).